A 337-amino-acid chain; its full sequence is LIX1-like protein (337 aa).

Residues 1-64 (METMRAQRLQ…PLLLSGAPGL (64 aa)) are disordered. Residues 26-38 (PGVTGAAAATATP) are compositionally biased toward low complexity. A compositionally biased stretch (pro residues) spans 39 to 56 (PAGPPPAPPPPAPPPPPL).

Belongs to the LIX1 family.

The chain is LIX1-like protein (LIX1L) from Homo sapiens (Human).